A 572-amino-acid chain; its full sequence is Sulfite reductase [NADPH] hemoprotein beta-component (572 aa).

Positions 437, 443, 482, and 486 each coordinate [4Fe-4S] cluster. Residue cysteine 486 coordinates siroheme.

Belongs to the nitrite and sulfite reductase 4Fe-4S domain family. Alpha(8)-beta(8). The alpha component is a flavoprotein, the beta component is a hemoprotein. It depends on siroheme as a cofactor. [4Fe-4S] cluster serves as cofactor.

It catalyses the reaction hydrogen sulfide + 3 NADP(+) + 3 H2O = sulfite + 3 NADPH + 4 H(+). It participates in sulfur metabolism; hydrogen sulfide biosynthesis; hydrogen sulfide from sulfite (NADPH route): step 1/1. In terms of biological role, component of the sulfite reductase complex that catalyzes the 6-electron reduction of sulfite to sulfide. This is one of several activities required for the biosynthesis of L-cysteine from sulfate. The polypeptide is Sulfite reductase [NADPH] hemoprotein beta-component (Lysinibacillus sphaericus (strain C3-41)).